Here is an 82-residue protein sequence, read N- to C-terminus: Defensin-like protein 156 (82 aa).

A signal peptide spans 1–27; it reads MAKISCSYFLVLMLVFSVFSLVEKTKG. 4 disulfide bridges follow: Cys-31/Cys-77, Cys-41/Cys-60, Cys-46/Cys-71, and Cys-50/Cys-73.

Belongs to the DEFL family. In terms of tissue distribution, expressed in flower buds, but not in stems, roots or rosette leaves.

The protein localises to the secreted. The protein is Defensin-like protein 156 (LCR21) of Arabidopsis thaliana (Mouse-ear cress).